The chain runs to 548 residues: Alpha-1,3-mannosyl-glycoprotein 4-beta-N-acetylglucosaminyltransferase B (548 aa).

Over 1-7 the chain is Cytoplasmic; the sequence is MRLRNGT. A helical; Signal-anchor for type II membrane protein membrane pass occupies residues 8 to 28; sequence FLTLLLFCLCAFLSLSWYAAL. Over 29 to 548 the chain is Lumenal; that stretch reads SGQKGDVVDV…LSEIFLKKAD (520 aa). Positions 36 to 83 form a coiled coil; that stretch reads VDVYQREFLALRDRLHAAEQESLKRSKELNLVLDEIKRAVSERQALRD. N-linked (GlcNAc...) asparagine glycans are attached at residues Asn87 and Asn103.

The protein belongs to the glycosyltransferase 54 family. In terms of assembly, interacts with SLC35A3. A divalent metal cation is required as a cofactor. Post-translationally, N-glycosylated. As to expression, widely expressed. Strongly overexpressed in pancreatic cancer.

It localises to the golgi apparatus membrane. The enzyme catalyses an N(4)-{beta-D-GlcNAc-(1-&gt;2)-alpha-D-Man-(1-&gt;3)-[alpha-D-Man-(1-&gt;6)]-beta-D-Man-(1-&gt;4)-beta-D-GlcNAc-(1-&gt;4)-beta-D-GlcNAc}-L-asparaginyl-[protein] + UDP-N-acetyl-alpha-D-glucosamine = an N(4)-{beta-D-GlcNAc-(1-&gt;2)-[beta-D-GlcNAc-(1-&gt;4)]-alpha-D-Man-(1-&gt;3)-[alpha-D-Man-(1-&gt;6)]-beta-D-Man-(1-&gt;4)-beta-D-GlcNAc-(1-&gt;4)-beta-D-GlcNAc}-L-asparaginyl-[protein] + UDP + H(+). The catalysed reaction is N(4)-{beta-D-GlcNAc-(1-&gt;2)-alpha-D-Man-(1-&gt;3)-[beta-D-GlcNAc-(1-&gt;2)-alpha-D-Man-(1-&gt;6)]-beta-D-Man-(1-&gt;4)-beta-D-GlcNAc-(1-&gt;4)-beta-D-GlcNAc}-L-asparaginyl-[protein] + UDP-N-acetyl-alpha-D-glucosamine = N(4)-{beta-D-GlcNAc-(1-&gt;2)-[beta-D-GlcNAc-(1-&gt;4)]-alpha-D-Man-(1-&gt;3)-[beta-D-GlcNAc-(1-&gt;2)-alpha-D-Man-(1-&gt;6)]-beta-D-Man-(1-&gt;4)-beta-D-GlcNAc-(1-&gt;4)-beta-D-GlcNAc}-L-asparaginyl-[protein] + UDP + H(+). It catalyses the reaction an N(4)-{beta-D-GlcNAc-(1-&gt;2)-alpha-D-Man-(1-&gt;3)-[beta-D-GlcNAc-(1-&gt;2)-[beta-D-GlcNAc-(1-&gt;6)]-alpha-D-Man-(1-&gt;6)]-beta-D-Man-(1-&gt;4)-beta-D-GlcNAc-(1-&gt;4)-beta-D-GlcNAc}-L-asparaginyl-[protein] + UDP-N-acetyl-alpha-D-glucosamine = an N(4)-{beta-D-GlcNAc-(1-&gt;2)-[beta-D-GlcNAc-(1-&gt;4)]-alpha-D-Man-(1-&gt;3)-[beta-D-GlcNAc-(1-&gt;2)-[beta-D-GlcNAc-(1-&gt;6)]-alpha-D-Man-(1-&gt;6)]-beta-D-Man-(1-&gt;4)-beta-D-GlcNAc-(1-&gt;4)-beta-D-GlcNAc}-L-asparaginyl-[protein] + UDP + H(+). It carries out the reaction an N(4)-{beta-D-GlcNAc-(1-&gt;2)-alpha-D-Man-(1-&gt;3)-[beta-D-GlcNAc-(1-&gt;2)-alpha-D-Man-(1-&gt;6)]-beta-D-Man-(1-&gt;4)-beta-D-GlcNAc-(1-&gt;4)-[alpha-L-Fuc-(1-&gt;6)]-beta-D-GlcNAc}-L-asparaginyl-[protein] + UDP-N-acetyl-alpha-D-glucosamine = N(4)-{beta-D-GlcNAc-(1-&gt;2)-[beta-D-GlcNAc-(1-&gt;4)]-alpha-D-Man-(1-&gt;3)-[beta-D-GlcNAc-(1-&gt;2)-alpha-D-Man-(1-&gt;6)]-beta-D-Man-(1-&gt;4)-beta-D-GlcNAc-(1-&gt;4)-[alpha-L-Fuc-(1-&gt;6)]-beta-D-GlcNAc}-asparaginyl-[protein] + UDP + H(+). The enzyme catalyses an N(4)-{beta-D-GlcNAc-(1-&gt;2)-alpha-D-Man-(1-&gt;3)-[beta-D-Gal-(1-&gt;4)-beta-D-GlcNAc-(1-&gt;2)-alpha-D-Man-(1-&gt;6)]-beta-D-Man-(1-&gt;4)-beta-D-GlcNAc-(1-&gt;4)-beta-D-GlcNAc}-L-asparaginyl-[protein] + UDP-N-acetyl-alpha-D-glucosamine = an N(4)-{beta-D-GlcNAc-(1-&gt;2)-[beta-D-GlcNAc-(1-&gt;4)]-alpha-D-Man-(1-&gt;3)-[beta-D-Gal-(1-&gt;4)-beta-D-GlcNAc-(1-&gt;2)-alpha-D-Man-(1-&gt;6)]-beta-D-Man-(1-&gt;4)-beta-D-GlcNAc-(1-&gt;4)-beta-D-GlcNAc}-L-asparaginyl-[protein] + UDP + H(+). The catalysed reaction is N(4)-{beta-D-GlcNAc-(1-&gt;2)-alpha-D-Man-(1-&gt;3)-[alpha-D-Man-(1-&gt;3)-{alpha-D-Man-(1-&gt;6)}-alpha-D-Man-(1-&gt;6)]-beta-D-Man-(1-&gt;4)-beta-D-GlcNAc-(1-&gt;4)-beta-D-GlcNAc}-asparaginyl-[protein] + UDP-N-acetyl-alpha-D-glucosamine = N(4)-{beta-D-GlcNAc-(1-&gt;2)-[beta-D-GlcNAc-(1-&gt;4)]-alpha-D-Man-(1-&gt;3)-[alpha-D-Man-(1-&gt;3)-{alpha-D-Man-(1-&gt;6)}-alpha-D-Man-(1-&gt;6)]-beta-D-Man-(1-&gt;4)-beta-D-GlcNAc-(1-&gt;4)-beta-D-GlcNAc}-asparaginyl-[protein] + UDP + H(+). It catalyses the reaction N(4)-{beta-D-GlcNAc-(1-&gt;2)-alpha-D-Man-(1-&gt;3)-beta-D-Man-(1-&gt;4)-beta-D-GlcNAc-(1-&gt;4)-beta-D-GlcNAc}-asparaginyl-[protein] + UDP-N-acetyl-alpha-D-glucosamine = N(4)-{beta-D-GlcNAc-(1-&gt;2)-[beta-D-GlcNAc-(1-&gt;4)]-alpha-D-Man-(1-&gt;3)-beta-D-Man-(1-&gt;4)-beta-D-GlcNAc-(1-&gt;4)-beta-D-GlcNAc}-asparaginyl-[protein] + UDP + H(+). Its pathway is protein modification; protein glycosylation. Glycosyltransferase that catalyzes the transfer of GlcNAc from UDP-GlcNAc to the GlcNAcbeta1-2Manalpha1-3 arm of the core structure of N-linked glycans through a beta1-4 linkage and participates in the production of tri- and tetra-antennary N-linked sugar chains. Prefers complex-type N-glycans over hybrid-types. Has lower affinities for donors or acceptors than MGAT4A, suggesting that, under physiological conditions, it is not the main contributor in N-glycan biosynthesis. The protein is Alpha-1,3-mannosyl-glycoprotein 4-beta-N-acetylglucosaminyltransferase B of Homo sapiens (Human).